Reading from the N-terminus, the 126-residue chain is MKTPAELKYSKDHEWARQEGDVVFIGITDYAQGELGEIVYVDVTTEGETLEADEVFGSIEAVKTVSDLMMPIAGEVLEVNPDLEEQPELVNSDPYGAGWIIKVKAANAADFDNLLSAAEYEKLIAQ.

Residues V22–K104 enclose the Lipoyl-binding domain. An N6-lipoyllysine modification is found at K63.

It belongs to the GcvH family. In terms of assembly, the glycine cleavage system is composed of four proteins: P, T, L and H. (R)-lipoate is required as a cofactor.

Its function is as follows. The glycine cleavage system catalyzes the degradation of glycine. The H protein shuttles the methylamine group of glycine from the P protein to the T protein. This Porphyromonas gingivalis (strain ATCC 33277 / DSM 20709 / CIP 103683 / JCM 12257 / NCTC 11834 / 2561) protein is Glycine cleavage system H protein.